The primary structure comprises 343 residues: L-ornithine/L-arginine 3-hydroxylase (343 aa).

Fe cation contacts are provided by His-147 and Glu-149. Positions Met-199–Asp-215 are enriched in polar residues. Positions Met-199–Lys-218 are disordered. His-302 is a binding site for Fe cation. Arg-316 serves as a coordination point for 2-oxoglutarate.

It belongs to the clavaminate synthase family. Fe(2+) is required as a cofactor.

The catalysed reaction is L-ornithine + 2-oxoglutarate + O2 = (3S)-3-hydroxy-L-ornithine + succinate + CO2. It carries out the reaction L-arginine + 2-oxoglutarate + O2 = (2S,3S)-hydroxyarginine + succinate + CO2. Alpha-ketoglutarate-dependent dioxygenase that in vitro catalyzes the regio- and stereoselective hydroxylation of L-ornithine and L-arginine, leading to (3S)-3-hydroxy-L-ornithine and (3S)-3-hydroxy-L-arginine, respectively. Cannot use L-lysine, D-ornithine, or D-arginine as substrate. The polypeptide is L-ornithine/L-arginine 3-hydroxylase (Catenulispora acidiphila (strain DSM 44928 / JCM 14897 / NBRC 102108 / NRRL B-24433 / ID139908)).